The sequence spans 54 residues: IVAVDCSDYPKPVCSLDYMPLCGSDNTTYNNKCIFCNAVVDSNGTITLSHFGKC.

The Kazal-like domain maps to 4–54 (VDCSDYPKPVCSLDYMPLCGSDNTTYNNKCIFCNAVVDSNGTITLSHFGKC). Intrachain disulfides connect cysteine 6-cysteine 36, cysteine 14-cysteine 33, and cysteine 22-cysteine 54. Asparagine 43 carries an N-linked (GlcNAc...) asparagine glycan.

The protein localises to the secreted. This chain is Ovomucoid, found in Haemorhous mexicanus (House finch).